The sequence spans 151 residues: Caveolin-3 (151 aa).

Topologically, residues 1-83 (MMAEERTDLE…RLLSTLLGVP (83 aa)) are cytoplasmic. Lys38 participates in a covalent cross-link: Glycyl lysine isopeptide (Lys-Gly) (interchain with G-Cter in SUMO3). The segment at 64-114 (TFTVSKYWCYRLLSTLLGVPLALLWGFLFACISFCHIWAVVPCIKSYLIEI) is required for interaction with DAG1. Positions 84-104 (LALLWGFLFACISFCHIWAVV) form an intramembrane region, helical. At 105–151 (PCIKSYLIEIQCISHIYSLCIRTFCNPVFAALGQVCSNIKVMLRKEV) the chain is on the cytoplasmic side.

The protein belongs to the caveolin family. Homooligomer. Interacts with DYSF. Interacts with DLG1 and KCNA5; forms a ternary complex. Interacts with DAG1 (via its C-terminal); the interaction prevents binding of DAG1 with DMD. Interacts with TRIM72. Interacts with MUSK; may regulate MUSK signaling. Interacts with POPDC1. Interacts with CAVIN1, CAVIN2 and CAVIN4. In terms of processing, sumoylation with SUMO3 by PIAS4 may reduce agonist-induced internalization and desensitization of adrenergic receptor ABRD2. As to expression, expressed specifically in skeletal muscle and heart.

It localises to the golgi apparatus membrane. Its subcellular location is the cell membrane. It is found in the membrane. The protein resides in the caveola. The protein localises to the sarcolemma. Functionally, may act as a scaffolding protein within caveolar membranes. Interacts directly with G-protein alpha subunits and can functionally regulate their activity. May also regulate voltage-gated potassium channels. Plays a role in the sarcolemma repair mechanism of both skeletal muscle and cardiomyocytes that permits rapid resealing of membranes disrupted by mechanical stress. Mediates the recruitment of CAVIN2 and CAVIN3 proteins to the caveolae. This Sus scrofa (Pig) protein is Caveolin-3 (CAV3).